The following is a 121-amino-acid chain: Small ribosomal subunit protein uS13 (121 aa).

A disordered region spans residues 96–121 (PVRGQNTKNNARTRKGKAVAIAGKKK). The segment covering 106–121 (ARTRKGKAVAIAGKKK) has biased composition (basic residues).

This sequence belongs to the universal ribosomal protein uS13 family. In terms of assembly, part of the 30S ribosomal subunit. Forms a loose heterodimer with protein S19. Forms two bridges to the 50S subunit in the 70S ribosome.

Its function is as follows. Located at the top of the head of the 30S subunit, it contacts several helices of the 16S rRNA. In the 70S ribosome it contacts the 23S rRNA (bridge B1a) and protein L5 of the 50S subunit (bridge B1b), connecting the 2 subunits; these bridges are implicated in subunit movement. Contacts the tRNAs in the A and P-sites. The protein is Small ribosomal subunit protein uS13 of Streptococcus agalactiae serotype Ia (strain ATCC 27591 / A909 / CDC SS700).